A 201-amino-acid chain; its full sequence is FMN reductase (NADH) RutF (201 aa).

Residues 169–201 form a disordered region; sequence APRSGAAPAEPARAARALGARPAEGPALALRSA.

The protein belongs to the non-flavoprotein flavin reductase family. RutF subfamily.

The catalysed reaction is FMNH2 + NAD(+) = FMN + NADH + 2 H(+). Its function is as follows. Catalyzes the reduction of FMN to FMNH2 which is used to reduce pyrimidine by RutA via the Rut pathway. This Methylorubrum extorquens (strain ATCC 14718 / DSM 1338 / JCM 2805 / NCIMB 9133 / AM1) (Methylobacterium extorquens) protein is FMN reductase (NADH) RutF.